Here is a 630-residue protein sequence, read N- to C-terminus: Probable potassium transport system protein Kup 2 (630 aa).

The next 12 helical transmembrane spans lie at F17–L37, V56–K76, V108–T128, P145–F165, A176–I196, F214–T234, W255–L275, F293–I313, I345–F365, Y375–W395, P402–A422, and L427–V447.

Belongs to the HAK/KUP transporter (TC 2.A.72) family.

The protein resides in the cell inner membrane. It catalyses the reaction K(+)(in) + H(+)(in) = K(+)(out) + H(+)(out). Functionally, transport of potassium into the cell. Likely operates as a K(+):H(+) symporter. This Rhodopseudomonas palustris (strain BisB18) protein is Probable potassium transport system protein Kup 2.